Consider the following 146-residue polypeptide: Putative calcium-binding protein CML19 (146 aa).

4 EF-hand domains span residues 3–38 (AATAEFRRVFSAFDRDADGKISAAELRLCMKAALGE), 40–75 (MSAEEAEALVSSADTDDDGLLDEEEFTKLAVQLEMG), 79–114 (ERCRGLMEAFRMYEMEGEGRITPASLKRMLSKLGSH), and 115–146 (QGIEECQTMICRFDLDGDGVISFEEFKIMMDA). Residues D16, D18, D20, K22, E27, D53, D55, D57, and E64 each coordinate Ca(2+). D128, D130, D132, and E139 together coordinate Ca(2+).

Functionally, potential calcium sensor. The protein is Putative calcium-binding protein CML19 (CML19) of Oryza sativa subsp. japonica (Rice).